We begin with the raw amino-acid sequence, 725 residues long: Sodium/hydrogen exchanger 7 (725 aa).

A disordered region spans residues 1–20; the sequence is MEPGDAARPGSGRATGAPPP. At 1–21 the chain is on the cytoplasmic side; sequence MEPGDAARPGSGRATGAPPPR. Residues 22–42 traverse the membrane as a helical segment; that stretch reads LLLLPLLLGWGLRVAAAASAS. The Lumenal portion of the chain corresponds to 43-70; that stretch reads SSGAAAEDSSAMEELATEKEAEESHRQD. A helical transmembrane segment spans residues 71-91; it reads SVSLLTFILLLTLTILTIWLF. Residues 92-95 lie on the Cytoplasmic side of the membrane; the sequence is KHRR. A helical membrane pass occupies residues 96 to 116; the sequence is VRFLHETGLAMIYGLIVGVIL. The Lumenal segment spans residues 117 to 175; that stretch reads RYGTPATSGRDKSLSCTQEDRAFSTLLVNVSGKFFEYTLKGEISPGKINSVEQNDMLRK. N145 carries an N-linked (GlcNAc...) asparagine glycan. The helical transmembrane segment at 176–196 threads the bilayer; the sequence is VTFDPEVFFNILLPPIIFHAG. At 197–210 the chain is on the cytoplasmic side; it reads YSLKKRHFFRNLGS. A helical transmembrane segment spans residues 211–231; sequence ILAYAFLGTAVSCFIIGNLMY. Residues 232-251 lie on the Lumenal side of the membrane; sequence GVVKLMKIMGQLSDKFYYTD. Residues 252 to 272 form a helical membrane-spanning segment; sequence CLFFGAIISATDPVTVLAIFN. Over 273-277 the chain is Cytoplasmic; it reads ELHAD. The helical transmembrane segment at 278–298 threads the bilayer; the sequence is VDLYALLFGESVLNDAVAIVL. Residues 299–322 are Lumenal-facing; sequence SSSIVAYQPAGLNTHAFDAAAFFK. Residues 323-343 form a helical membrane-spanning segment; that stretch reads SVGIFLGIFSGSFTMGAVTGV. Over 344-349 the chain is Cytoplasmic; sequence NANVTK. A run of 2 helical transmembrane segments spans residues 350-370 and 371-391; these read FTKL…MSWS and TFLL…FCGI. Residues 392–414 lie on the Cytoplasmic side of the membrane; it reads TQAHYTYNNLSVESRSRTKQLFE. A helical transmembrane segment spans residues 415-435; it reads VLHFLAENFIFSYMGLALFTF. Over 436-442 the chain is Lumenal; sequence QKHVFSP. A helical membrane pass occupies residues 443–463; sequence IFIIGAFVAIFLGRAAHIYPL. At 464–474 the chain is on the cytoplasmic side; that stretch reads SFFLNLGRRHK. A helical transmembrane segment spans residues 475-497; sequence IGWNFQHMMMFSGLRGAMAFALA. Residues 498 to 513 are Lumenal-facing; that stretch reads IRDTASYARQMMFTTT. The chain crosses the membrane as a helical span at residues 514–534; the sequence is LLIVFFTVWIIGGGTTPMLSW. Required for trans-Golgi network localization stretches follow at residues 533-559 and 563-568; these read SWLN…YFRV and PDQDPP. Residues 535–725 lie on the Cytoplasmic side of the membrane; it reads LNIRVGVEEP…RLVFPLEDNA (191 aa). S545 carries the post-translational modification Phosphoserine. 2 disordered regions span residues 567-590 and 669-714; these read PPPN…GNRT and TVTA…SSRG. Residues 675–684 show a composition bias toward low complexity; the sequence is SSSSHTASTS. Basic and acidic residues predominate over residues 687–704; that stretch reads GSRRTKSSSEEVLERDLG.

It belongs to the monovalent cation:proton antiporter 1 (CPA1) transporter (TC 2.A.36) family. As to quaternary structure, interacts with SCAMP1, SCAMP2 and SCAMP5; may participate in its shuttling from trans-Golgi network to recycling endosomes. In terms of processing, N-glycosylated. Ubiquitously expressed.

Its subcellular location is the golgi apparatus. The protein resides in the trans-Golgi network membrane. It is found in the recycling endosome membrane. It localises to the cell membrane. It catalyses the reaction Na(+)(in) + H(+)(out) = Na(+)(out) + H(+)(in). It carries out the reaction K(+)(in) + H(+)(out) = K(+)(out) + H(+)(in). With respect to regulation, inhibited by benzamil and quinine but not by amiloride. Golgi Na(+), K(+)/(H+) antiporter. Mediates the electoneutral influx of Na(+) or K(+) in exchange for H(+). May contribute to the regulation of Golgi apparatus volume and pH. This Homo sapiens (Human) protein is Sodium/hydrogen exchanger 7 (SLC9A7).